We begin with the raw amino-acid sequence, 783 residues long: LPS-assembly protein LptD (783 aa).

Positions 1 to 24 (MKKNYYSLISFSIFTALYSTAGFA) are cleaved as a signal peptide.

Belongs to the LptD family. In terms of assembly, component of the lipopolysaccharide transport and assembly complex. Interacts with LptE and LptA.

It localises to the cell outer membrane. Its function is as follows. Together with LptE, is involved in the assembly of lipopolysaccharide (LPS) at the surface of the outer membrane. This is LPS-assembly protein LptD from Mannheimia succiniciproducens (strain KCTC 0769BP / MBEL55E).